The chain runs to 291 residues: Verruculogen synthase (291 aa).

Y68 is a catalytic residue.

It belongs to the PhyH family. In terms of assembly, homodimer. Fe cation is required as a cofactor.

It catalyses the reaction fumitremorgin B + 2-oxoglutarate + AH2 + 2 O2 = verruculogen + succinate + A + CO2 + H2O. Its pathway is mycotoxin biosynthesis. Functionally, verruculogen synthase; part of the gene cluster that mediates the biosynthesis of fumitremorgins, indole alkaloids that carry not only intriguing chemical structures, but also interesting biological and pharmacological activities. The biosynthesis of fumitremorgin-type alkaloids begins by condensation of the two amino acids L-tryptophan and L-proline to brevianamide F, catalyzed by the non-ribosomal peptide synthetase ftmA. Brevianamide F is then prenylated by the prenyltransferase ftmPT1/ftmB in the presence of dimethylallyl diphosphate, resulting in the formation of tryprostatin B. The three cytochrome P450 monooxygenases, ftmP450-1/ftmC, ftmP450-2/ftmE and ftmP450-3/FtmG, are responsible for the conversion of tryprostatin B to 6-hydroxytryprostatin B, tryprostatin A to fumitremorgin C and fumitremorgin C to 12,13-dihydroxyfumitremorgin C, respectively. The putative methyltransferase ftmMT/ftmD is expected for the conversion of 6-hydroxytryprostatin B to tryprostatin A. FtmPT2/FtmH catalyzes the prenylation of 12,13-dihydroxyfumitre-morgin C in the presence of dimethylallyl diphosphate, resulting in the formation of fumitremorgin B. Fumitremorgin B is further converted to verruculogen by ftmOx1/ftmF via the insertion of an endoperoxide bond between the two prenyl moieties. In some fungal species, verruculogen is further converted to fumitremorgin A, but the enzymes involved in this step have not been identified yet. The sequence is that of Verruculogen synthase from Aspergillus fumigatus (strain ATCC MYA-4609 / CBS 101355 / FGSC A1100 / Af293) (Neosartorya fumigata).